Here is a 460-residue protein sequence, read N- to C-terminus: Cysteine--tRNA ligase (460 aa).

A Zn(2+)-binding site is contributed by C27. Residues P29–H39 carry the 'HIGH' region motif. 3 residues coordinate Zn(2+): C202, H227, and E231. Residues K259–S263 carry the 'KMSKS' region motif. K262 lines the ATP pocket.

This sequence belongs to the class-I aminoacyl-tRNA synthetase family. In terms of assembly, monomer. It depends on Zn(2+) as a cofactor.

The protein localises to the cytoplasm. It catalyses the reaction tRNA(Cys) + L-cysteine + ATP = L-cysteinyl-tRNA(Cys) + AMP + diphosphate. The protein is Cysteine--tRNA ligase of Campylobacter lari (strain RM2100 / D67 / ATCC BAA-1060).